The following is a 236-amino-acid chain: Syntaxin-8 (236 aa).

Over 1–215 the chain is Cytoplasmic; it reads MAPDPWFSTY…MVDRKSASCG (215 aa). Positions 42 to 65 form a coiled coil; sequence VTIRALLQNLKEKIALLKDLLLRA. One can recognise a t-SNARE coiled-coil homology domain in the interval 145 to 207; the sequence is QKIIQEQDAG…RNETRRVNMV (63 aa). Position 160 is a phosphoserine (serine 160). The chain crosses the membrane as a helical; Anchor for type IV membrane protein span at residues 216 to 232; that stretch reads MIMVILLLLVAIVVVAV. Residues 233–236 are Vesicular-facing; that stretch reads WPTN.

The protein belongs to the syntaxin family. As to quaternary structure, forms a SNARE complex with STX7, VTI1B and VAMP8 which functions in the homotypic fusion of late endosomes. Part of the SNARE core complex containing STX7, VAMP8 and VTI1B. Interacts with VAMP8. Interacts with HECTD3. Interacts with TPC1. Ubiquitinated by HECTD3. In terms of tissue distribution, highly expressed in heart. Also found in brain, kidney, liver, lung, placenta, skeletal muscle, spleen and pancreas.

It is found in the membrane. Vesicle trafficking protein that functions in the early secretory pathway, possibly by mediating retrograde transport from cis-Golgi membranes to the ER. This is Syntaxin-8 (STX8) from Homo sapiens (Human).